Consider the following 426-residue polypeptide: Glutamyl-tRNA reductase (426 aa).

Residues 49–52 (TCNR), serine 101, 106–108 (EPQ), and glutamine 112 contribute to the substrate site. The Nucleophile role is filled by cysteine 50. Residue 181–186 (GAGETI) coordinates NADP(+). The tract at residues 405 to 426 (RLFPEKPGYQHPPHSYPDREDR) is disordered.

This sequence belongs to the glutamyl-tRNA reductase family. Homodimer.

It carries out the reaction (S)-4-amino-5-oxopentanoate + tRNA(Glu) + NADP(+) = L-glutamyl-tRNA(Glu) + NADPH + H(+). It functions in the pathway porphyrin-containing compound metabolism; protoporphyrin-IX biosynthesis; 5-aminolevulinate from L-glutamyl-tRNA(Glu): step 1/2. Its function is as follows. Catalyzes the NADPH-dependent reduction of glutamyl-tRNA(Glu) to glutamate 1-semialdehyde (GSA). This Xanthomonas axonopodis pv. citri (strain 306) protein is Glutamyl-tRNA reductase.